Reading from the N-terminus, the 669-residue chain is Glutamate--cysteine ligase (669 aa).

The protein belongs to the glutamate--cysteine ligase type 3 family. Heterodimer of a catalytic heavy chain and a regulatory light chain.

It catalyses the reaction L-cysteine + L-glutamate + ATP = gamma-L-glutamyl-L-cysteine + ADP + phosphate + H(+). It functions in the pathway sulfur metabolism; glutathione biosynthesis; glutathione from L-cysteine and L-glutamate: step 1/2. In terms of biological role, catalyzes the ATP-dependent ligation of L-glutamate and L-cysteine and participates in the first and rate-limiting step in glutathione biosynthesis. The protein is Glutamate--cysteine ligase (gcs1) of Schizosaccharomyces pombe (strain 972 / ATCC 24843) (Fission yeast).